The following is a 729-amino-acid chain: Oligopeptide transporter 4 (729 aa).

Ala-2 is modified (N-acetylalanine). Ser-8 is modified (phosphoserine). 16 consecutive transmembrane segments (helical) span residues 37-57 (MWFLGLISCSLLSFLNQFFSY), 61-81 (PLVITQITVQVATLPIGHFLA), 123-143 (AFGSGSAYAVGIITIIKAFYG), 148-168 (FIAGWLLIITTQVLGYGWAGL), 177-194 (AHMWWPSTLVQVSLFRAL), 207-227 (FFVIALVCSFGWYIVPGYLFT), 256-276 (GLGAFTLDWTAVASFLFSPLI), 279-299 (FFAIANVFIGYVLLIYFVLPL), 352-372 (LSMFFALTYGLGFATIASTLT), 410-430 (WWFYSMLAATLLISLALCVFL), 438-458 (WWGLVFASAMAFVFTLPISII), 522-542 (FLVQFIGTILAGTINITVAWW), 592-612 (YAAMNWFFLGGALGPVIVWSL), 621-637 (WIPLVNLPVLLGATAMM), 640-660 (ATAVNYNSWILVGTIFNLFVF), and 673-693 (VLSAAMDAGVAFMAVLLYFSV).

The protein belongs to the oligopeptide OPT transporter (TC 2.A.67.1) family. In terms of tissue distribution, expressed in flowers, leaves, roots, and stems.

Its subcellular location is the membrane. Its function is as follows. Involved in the translocation of tetra- and pentapeptides across the cellular membrane in an energy-dependent manner. This Arabidopsis thaliana (Mouse-ear cress) protein is Oligopeptide transporter 4 (OPT4).